Here is a 747-residue protein sequence, read N- to C-terminus: DNA damage checkpoint protein LCD1 (747 aa).

Phosphoserine is present on residues serine 10, serine 11, and serine 76. Positions 62 to 139 (NQLVNQLNKA…MEARGKSKRE (78 aa)) form a coiled coil. Residues 145–180 (KPPSTTLSTNTNTITPDSSSVAIEAKPQSPQSKKRK) form a disordered region. Low complexity predominate over residues 146–160 (PPSTTLSTNTNTITP).

In terms of assembly, forms a complex with MEC1. In terms of processing, phosphorylated by MEC1 in a cell cycle dependent manner and in response to DNA damage.

Its subcellular location is the cytoplasm. The protein resides in the nucleus. In terms of biological role, forms a complex with the serine/threonine kinase MEC1 which activates checkpoint signaling upon genotoxic stresses. The MEC1-LCD1 complex is recruited by the single-strand-binding protein complex RPA to DNA lesions in order to initiate the DNA repair by homologous recombination, after the MRX-complex and TEL1 are displaced. Required for the recruitment of MEC1 to DNA lesions, the activation of CHK1 and RAD53 kinases and phosphorylation of RAD9 in response to DNA damage. Required for cell growth and meiotic recombination. The sequence is that of DNA damage checkpoint protein LCD1 (LCD1) from Saccharomyces cerevisiae (strain ATCC 204508 / S288c) (Baker's yeast).